The primary structure comprises 245 residues: Biosynthetic peptidoglycan transglycosylase (245 aa).

A helical transmembrane segment spans residues 10 to 30 (FLALLFVVATLAQLWYLGQVL). The tract at residues 224-245 (DPGTVPLPPPPEPTAPPEGNTQ) is disordered. Pro residues predominate over residues 226 to 239 (GTVPLPPPPEPTAP).

This sequence belongs to the glycosyltransferase 51 family.

The protein localises to the cell inner membrane. It carries out the reaction [GlcNAc-(1-&gt;4)-Mur2Ac(oyl-L-Ala-gamma-D-Glu-L-Lys-D-Ala-D-Ala)](n)-di-trans,octa-cis-undecaprenyl diphosphate + beta-D-GlcNAc-(1-&gt;4)-Mur2Ac(oyl-L-Ala-gamma-D-Glu-L-Lys-D-Ala-D-Ala)-di-trans,octa-cis-undecaprenyl diphosphate = [GlcNAc-(1-&gt;4)-Mur2Ac(oyl-L-Ala-gamma-D-Glu-L-Lys-D-Ala-D-Ala)](n+1)-di-trans,octa-cis-undecaprenyl diphosphate + di-trans,octa-cis-undecaprenyl diphosphate + H(+). It participates in cell wall biogenesis; peptidoglycan biosynthesis. Functionally, peptidoglycan polymerase that catalyzes glycan chain elongation from lipid-linked precursors. This is Biosynthetic peptidoglycan transglycosylase from Alcanivorax borkumensis (strain ATCC 700651 / DSM 11573 / NCIMB 13689 / SK2).